A 499-amino-acid polypeptide reads, in one-letter code: Glutamyl-tRNA(Gln) amidotransferase subunit A (499 aa).

Residues lysine 75 and serine 150 each act as charge relay system in the active site. Serine 174 serves as the catalytic Acyl-ester intermediate.

This sequence belongs to the amidase family. GatA subfamily. As to quaternary structure, heterotrimer of A, B and C subunits.

The catalysed reaction is L-glutamyl-tRNA(Gln) + L-glutamine + ATP + H2O = L-glutaminyl-tRNA(Gln) + L-glutamate + ADP + phosphate + H(+). Its function is as follows. Allows the formation of correctly charged Gln-tRNA(Gln) through the transamidation of misacylated Glu-tRNA(Gln) in organisms which lack glutaminyl-tRNA synthetase. The reaction takes place in the presence of glutamine and ATP through an activated gamma-phospho-Glu-tRNA(Gln). The chain is Glutamyl-tRNA(Gln) amidotransferase subunit A from Ralstonia pickettii (strain 12J).